We begin with the raw amino-acid sequence, 486 residues long: MEKYMSLKKKISYSEDKDVSGSEKANELLKWLQAYIPGKDSNIVVEHEPSKDAAKELIRGDYRWGHQDDDKSKAFQLKYTFLESKPDDMPWHISEFSAFNEKQKAAAKLSIQSWADVANINFVETTDAKEANITFGFFDVSLTGSYAFAYLPRPEKTQLGTWYNAKSRTFSNNDIDVNGYGRQTFTHEIGHTLGLQHPADYNASDEVSPTYKNSATYFEDSRAYTVMSYFSEKNTGQDFKGIYSSAPLLNDISAIQAVYGANNTIRADDTVYGFNSNTDRDFYTAKDENSKLLFTAWDTGGNDTFDFSGFTQDQRINLNEASFSDVGGLKGNVSIARGVTIENAIGGSGNDVLIGNDAANTLKGGAGDDIIYGGLGADNLWGGEGKDTFVYLSAKESPPLERDWIHDFVSGEDKIDVSLFDLGEAGKGGVRFVREFTGEVGEAVLRYNTVDKVNDFAINLGGEFSYDDFWVKIVGEPILESDFILS.

Residue His187 coordinates Zn(2+). The active site involves Glu188. Positions 191 and 197 each coordinate Zn(2+). The Ca(2+) site is built by Arg266, Asp269, Asp298, Gly300, Gly301, Asp303, Thr340, and Glu342. Hemolysin-type calcium-binding repeat units lie at residues 345-362 and 363-380; these read IGGS…ANTL and KGGA…ADNL.

It belongs to the peptidase M10B family. Zn(2+) is required as a cofactor. Ca(2+) serves as cofactor.

It is found in the secreted. The catalysed reaction is Preferential cleavage of bonds with hydrophobic residues in P1'.. The chain is Serralysin (prtA1) from Photorhabdus luminescens (Xenorhabdus luminescens).